The primary structure comprises 262 residues: Flap endonuclease Xni (262 aa).

D109 is a Mg(2+) binding site. Residues 165-255 (LKPEQLADYW…FNLQDIRYEK (91 aa)) enclose the 5'-3' exonuclease domain. K(+)-binding residues include L176, A177, I187, and V190. Residues 189 to 194 (GVGPKA) are interaction with DNA.

Belongs to the Xni family. Mg(2+) is required as a cofactor. K(+) serves as cofactor.

Has flap endonuclease activity. During DNA replication, flap endonucleases cleave the 5'-overhanging flap structure that is generated by displacement synthesis when DNA polymerase encounters the 5'-end of a downstream Okazaki fragment. The chain is Flap endonuclease Xni from Aliivibrio fischeri (strain MJ11) (Vibrio fischeri).